Here is a 164-residue protein sequence, read N- to C-terminus: MGRFLFASLGLLVVAFSLSGTGANLYCPFDWLSYNVSCYKLFYSLVTWDQAQRFCVEQQENSQLASIHDVGESVKLSNYISQRWGFFDVWMGLRLSKRNGIWEWSDGSNLTYTSWKEGEPNNLFNMEFCAVLSAGTRYLQWNDKKCTLLHPFLCQFQPRSEANG.

Positions Met1–Ala23 are cleaved as a signal peptide. Intrachain disulfides connect Cys27–Cys38, Cys55–Cys154, and Cys129–Cys146. Residues Tyr34 to Gln155 enclose the C-type lectin domain. Residues Asn35 and Asn109 are each glycosylated (N-linked (GlcNAc...) asparagine). The short motif at Glu119 to Asn121 is the Mannose-binding element. 3 residues coordinate Ca(2+): Glu127, Asn142, and Asp143.

This sequence belongs to the true venom lectin family. As to expression, expressed by the venom gland.

It is found in the secreted. Functionally, mannose-binding lectin which recognizes specific carbohydrate structures and agglutinates a variety of animal cells by binding to cell-surface glycoproteins and glycolipids. May be a calcium-dependent lectin. This Hydrophis hardwickii (Hardwick's spine-bellied seasnake) protein is C-type lectin 1.